The sequence spans 387 residues: MATTKSFLILIVMILATTSSTFASLEEMVTVLSIDGGGIKGIIPGTILEFLEGQLQKMDNNADARLADYFDVIGGTSTGGLLTAMITTPNENNRPFAAANEIVPFYFEHGPHIFNSSTGQFFGPKYDGKYLMQVLQEKLGETRVHQALTEVAISSFDIKTNKPVIFTKSNLAKSPELDAKMYDICYSAAAAPTYFPPHYFATNTINGDKYEFNLVDGAVATVADPALLSVSVATRRAQEDPAFASIRSLNYKKMLLLSLGTGTTSEFDKTHTAEETAKWGALQWMLVIQQMTEAASSYMTDYYLSTVFQDLHSQNNYLRVQENALTGTTTKADDASEANMELLAQVGENLLKKPVSKDNPETYEEALKRFAKLLSDRKKLRANKASY.

An N-terminal signal peptide occupies residues 1-23; that stretch reads MATTKSFLILIVMILATTSSTFA. The PNPLA domain maps to 32–230; it reads LSIDGGGIKG…TVADPALLSV (199 aa). Positions 36–41 match the GXGXXG motif; the sequence is GGGIKG. The GXSXG signature appears at 75–79; it reads GTSTG. Ser-77 functions as the Nucleophile in the catalytic mechanism. The N-linked (GlcNAc...) asparagine glycan is linked to Asn-115. The active-site Proton acceptor is Asp-216. The DGA/G signature appears at 216-218; the sequence is DGA. Residues 361–385 are a coiled coil; the sequence is ETYEEALKRFAKLLSDRKKLRANKA.

The protein belongs to the patatin family. In terms of tissue distribution, tuber and stolon.

Its subcellular location is the vacuole. Its function is as follows. Probable lipolytic acyl hydrolase (LAH), an activity which is thought to be involved in the response of tubers to pathogens. In Solanum tuberosum (Potato), this protein is Patatin group A-2.